An 800-amino-acid polypeptide reads, in one-letter code: Protein gfi-3 (800 aa).

Positions 346 to 366 (ESLQQAQLRNDEICHQMANIE) form a coiled coil. TPR repeat units lie at residues 526–559 (AIGA…YPEE) and 637–670 (IRIH…AENT).

In terms of assembly, the APC/C complex is probably composed of at least 12 subunits: apc-2, apc-10, apc-11, cdc-26, emb-1, emb-27, emb-30, mat-1, mat-2, mat-3, such-1 and gfi-3. In terms of tissue distribution, expressed in gut cells and mature sperm stored in the spermatheca.

It participates in protein modification; protein ubiquitination. In terms of biological role, probable component of the anaphase promoting complex/cyclosome (APC/C), a cell cycle-regulated E3 ubiquitin ligase that controls progression through mitosis and the G1 phase of the cell cycle. The APC/C complex acts by mediating ubiquitination and subsequent degradation of target proteins. Required for the metaphase to anaphase transition in meiosis. The sequence is that of Protein gfi-3 from Caenorhabditis elegans.